Reading from the N-terminus, the 390-residue chain is Transforming growth factor beta-1 proprotein (390 aa).

A signal peptide spans 1–29 (MPPSGLRLLPLLLPLLRLLVLTPGRPAAG). A straightjacket domain region spans residues 30-74 (LSTCKTIDMELVKRKRIEAIRGQILSKLRLSSPPSQGEVPPVPLP). The arm domain stretch occupies residues 75–271 (EAVLALYNST…ATPLERAQHL (197 aa)). N-linked (GlcNAc...) asparagine glycans are attached at residues Asn82, Asn136, and Asn176. The interval 226-252 (DSKDNTLQVDINGFSSSRRGDLATIHG) is bowtie tail. A Cell attachment site motif is present at residues 244-246 (RGD). 4 disulfide bridges follow: Cys285/Cys294, Cys293/Cys356, Cys322/Cys387, and Cys326/Cys389.

The protein belongs to the TGF-beta family. As to quaternary structure, homodimer; disulfide-linked. Interacts with the serine proteases, HTRA1 and HTRA3: the interaction with either inhibits TGFB1-mediated signaling and the HTRA protease activity is required for this inhibition. May interact with THSD4; this interaction may lead to sequestration by FBN1 microfibril assembly and attenuation of TGFB signaling. Interacts with CD109, DPT and ASPN. Interacts with EFEMP2. Interacts with TSKU; the interaction contributes to regulation of the hair cycle. Interacts with TGFBR3. Homodimer; disulfide-linked. Interacts with transforming growth factor beta-1 (TGF-beta-1) chain; interaction is non-covalent and maintains TGF-beta-1 in a latent state; each latency-associated peptide (LAP) monomer interacts with TGF-beta-1 in the other monomer. Interacts with LTBP1; leading to regulation of TGF-beta-1 activation. Interacts with LRRC32/GARP; leading to regulation of TGF-beta-1 activation on the surface of activated regulatory T-cells (Tregs). Interacts with LRRC33/NRROS; leading to regulation of TGF-beta-1 activation in macrophages and microglia. Interacts (via cell attachment site) with integrins ITGAV and ITGB6 (ITGAV:ITGB6), leading to release of the active TGF-beta-1. Interacts with NREP; the interaction results in a decrease in TGFB1 autoinduction. Interacts with HSP90AB1; inhibits latent TGFB1 activation. In terms of assembly, homodimer; disulfide-linked. Interacts with TGF-beta receptors (TGFBR1 and TGFBR2), leading to signal transduction. Post-translationally, transforming growth factor beta-1 proprotein: The precursor proprotein is cleaved in the Golgi apparatus by FURIN to form Transforming growth factor beta-1 (TGF-beta-1) and Latency-associated peptide (LAP) chains, which remain non-covalently linked, rendering TGF-beta-1 inactive. N-glycosylated. Deglycosylation leads to activation of Transforming growth factor beta-1 (TGF-beta-1); mechanisms triggering deglycosylation-driven activation of TGF-beta-1 are however unclear.

It is found in the secreted. The protein localises to the extracellular space. It localises to the extracellular matrix. Its function is as follows. Transforming growth factor beta-1 proprotein: Precursor of the Latency-associated peptide (LAP) and Transforming growth factor beta-1 (TGF-beta-1) chains, which constitute the regulatory and active subunit of TGF-beta-1, respectively. In terms of biological role, required to maintain the Transforming growth factor beta-1 (TGF-beta-1) chain in a latent state during storage in extracellular matrix. Associates non-covalently with TGF-beta-1 and regulates its activation via interaction with 'milieu molecules', such as LTBP1, LRRC32/GARP and LRRC33/NRROS, that control activation of TGF-beta-1. Interaction with LRRC33/NRROS regulates activation of TGF-beta-1 in macrophages and microglia. Interaction with LRRC32/GARP controls activation of TGF-beta-1 on the surface of activated regulatory T-cells (Tregs). Interaction with integrins (ITGAV:ITGB6 or ITGAV:ITGB8) results in distortion of the Latency-associated peptide chain and subsequent release of the active TGF-beta-1. Functionally, multifunctional protein that regulates the growth and differentiation of various cell types and is involved in various processes, such as normal development, immune function, microglia function and responses to neurodegeneration. Activation into mature form follows different steps: following cleavage of the proprotein in the Golgi apparatus, Latency-associated peptide (LAP) and Transforming growth factor beta-1 (TGF-beta-1) chains remain non-covalently linked rendering TGF-beta-1 inactive during storage in extracellular matrix. At the same time, LAP chain interacts with 'milieu molecules', such as LTBP1, LRRC32/GARP and LRRC33/NRROS that control activation of TGF-beta-1 and maintain it in a latent state during storage in extracellular milieus. TGF-beta-1 is released from LAP by integrins (ITGAV:ITGB6 or ITGAV:ITGB8): integrin-binding to LAP stabilizes an alternative conformation of the LAP bowtie tail and results in distortion of the LAP chain and subsequent release of the active TGF-beta-1. Once activated following release of LAP, TGF-beta-1 acts by binding to TGF-beta receptors (TGFBR1 and TGFBR2), which transduce signal. While expressed by many cells types, TGF-beta-1 only has a very localized range of action within cell environment thanks to fine regulation of its activation by Latency-associated peptide chain (LAP) and 'milieu molecules'. Plays an important role in bone remodeling: acts as a potent stimulator of osteoblastic bone formation, causing chemotaxis, proliferation and differentiation in committed osteoblasts. Can promote either T-helper 17 cells (Th17) or regulatory T-cells (Treg) lineage differentiation in a concentration-dependent manner. At high concentrations, leads to FOXP3-mediated suppression of RORC and down-regulation of IL-17 expression, favoring Treg cell development. At low concentrations in concert with IL-6 and IL-21, leads to expression of the IL-17 and IL-23 receptors, favoring differentiation to Th17 cells. Stimulates sustained production of collagen through the activation of CREB3L1 by regulated intramembrane proteolysis (RIP). Mediates SMAD2/3 activation by inducing its phosphorylation and subsequent translocation to the nucleus. Positively regulates odontoblastic differentiation in dental papilla cells, via promotion of IPO7-mediated translocation of phosphorylated SMAD2 to the nucleus and subsequent transcription of target genes. Can induce epithelial-to-mesenchymal transition (EMT) and cell migration in various cell types. This is Transforming growth factor beta-1 proprotein (TGFB1) from Canis lupus familiaris (Dog).